The primary structure comprises 394 residues: Elongation factor Tu 2 (394 aa).

The tr-type G domain maps to 10-204 (KPHVNVGTIG…FLDSYIPEPE (195 aa)). The interval 19 to 26 (GHVDHGKT) is G1. 19-26 (GHVDHGKT) serves as a coordination point for GTP. Residue threonine 26 participates in Mg(2+) binding. Residues 60 to 64 (GITIN) form a G2 region. The segment at 81–84 (DCPG) is G3. GTP-binding positions include 81-85 (DCPGH) and 136-139 (NKCD). A G4 region spans residues 136–139 (NKCD). Residues 174–176 (SAL) are G5.

The protein belongs to the TRAFAC class translation factor GTPase superfamily. Classic translation factor GTPase family. EF-Tu/EF-1A subfamily. Monomer.

It localises to the cytoplasm. It catalyses the reaction GTP + H2O = GDP + phosphate + H(+). Functionally, GTP hydrolase that promotes the GTP-dependent binding of aminoacyl-tRNA to the A-site of ribosomes during protein biosynthesis. This chain is Elongation factor Tu 2, found in Shigella flexneri serotype 5b (strain 8401).